Consider the following 226-residue polypeptide: Late protein I226R (226 aa).

The signal sequence occupies residues 1 to 16 (MKMETFLVCLFHNADG). N-linked (GlcNAc...) asparagine; by host glycans are attached at residues Asn142 and Asn164.

Belongs to the asfivirus I226R family.

In terms of biological role, plays a role in the inhibition of host NF-kappa-B and IRF3 signaling pathways. Mechanistically, promotes the degradation of host IKBKG through enhancing its ubiquitination leading to inhibition of both pathways. The chain is Late protein I226R from African swine fever virus (isolate Warthog/Namibia/Wart80/1980) (ASFV).